The chain runs to 166 residues: Large ribosomal subunit protein uL10 (166 aa).

It belongs to the universal ribosomal protein uL10 family. In terms of assembly, part of the ribosomal stalk of the 50S ribosomal subunit. The N-terminus interacts with L11 and the large rRNA to form the base of the stalk. The C-terminus forms an elongated spine to which L12 dimers bind in a sequential fashion forming a multimeric L10(L12)X complex.

Forms part of the ribosomal stalk, playing a central role in the interaction of the ribosome with GTP-bound translation factors. The sequence is that of Large ribosomal subunit protein uL10 from Enterococcus faecalis (strain ATCC 700802 / V583).